The following is a 316-amino-acid chain: Homoserine kinase (316 aa).

An ATP-binding site is contributed by 96–106 (PHGRGLGSSGA).

The protein belongs to the GHMP kinase family. Homoserine kinase subfamily.

Its subcellular location is the cytoplasm. It catalyses the reaction L-homoserine + ATP = O-phospho-L-homoserine + ADP + H(+). It functions in the pathway amino-acid biosynthesis; L-threonine biosynthesis; L-threonine from L-aspartate: step 4/5. Catalyzes the ATP-dependent phosphorylation of L-homoserine to L-homoserine phosphate. In Clavibacter michiganensis subsp. michiganensis (strain NCPPB 382), this protein is Homoserine kinase.